Reading from the N-terminus, the 337-residue chain is MKRIAVLTSGGDAPGMNAAIRAVVRKAISEGMEVYGINRGYAGMVDGDIFPLGSKEVGDKISRGGTFLYSARYPEFAQLEGQLAGIEQLKKHGIEGVVVIGGDGSYHGAMRLTEHGFPAVGIPGTIDNDIAGTDYTIGFDTAVNTAVEAIDKLRDTSSSHGRTFVVEVMGRNAGDIALWAGIASGADQIIVPEEEFDIEKVASTIQYDFEHKGKNHHIIVLAEGVMSGEAFAQKLKEAGDKSDLRVTNLGHILRGGSPTARDRVIASWMGSHAVELLKDGKGGLAVGIHNEELVESPILGTAEEGALFSLTEEGKIIVNNPHKARLDFAALNRSLSQ.

Gly11 provides a ligand contact to ATP. 21–25 (RAVVR) is a binding site for ADP. ATP-binding positions include 72–73 (RY) and 102–105 (GDGS). Position 103 (Asp103) interacts with Mg(2+). 125-127 (TID) lines the substrate pocket. Asp127 (proton acceptor) is an active-site residue. Arg154 lines the ADP pocket. Residues Arg162 and 169–171 (MGR) contribute to the substrate site. ADP is bound by residues 185–187 (GAD), Lys212, and 214–216 (KNH). Residues Glu223, Arg245, and 251-254 (HILR) each bind substrate.

It belongs to the phosphofructokinase type A (PFKA) family. ATP-dependent PFK group I subfamily. Prokaryotic clade 'B1' sub-subfamily. In terms of assembly, homotetramer. Mg(2+) serves as cofactor.

It localises to the cytoplasm. The catalysed reaction is beta-D-fructose 6-phosphate + ATP = beta-D-fructose 1,6-bisphosphate + ADP + H(+). Its pathway is carbohydrate degradation; glycolysis; D-glyceraldehyde 3-phosphate and glycerone phosphate from D-glucose: step 3/4. Its activity is regulated as follows. Allosterically activated by ADP and other diphosphonucleosides, and allosterically inhibited by phosphoenolpyruvate. In terms of biological role, catalyzes the phosphorylation of D-fructose 6-phosphate to fructose 1,6-bisphosphate by ATP, the first committing step of glycolysis. In Streptococcus pyogenes serotype M1, this protein is ATP-dependent 6-phosphofructokinase.